Here is a 350-residue protein sequence, read N- to C-terminus: Ribosomal RNA small subunit methyltransferase C (350 aa).

It belongs to the methyltransferase superfamily. RsmC family. In terms of assembly, monomer.

The protein resides in the cytoplasm. It carries out the reaction guanosine(1207) in 16S rRNA + S-adenosyl-L-methionine = N(2)-methylguanosine(1207) in 16S rRNA + S-adenosyl-L-homocysteine + H(+). Functionally, specifically methylates the guanine in position 1207 of 16S rRNA in the 30S particle. The chain is Ribosomal RNA small subunit methyltransferase C from Sodalis glossinidius (strain morsitans).